The chain runs to 389 residues: 23S rRNA (uracil(747)-C(5))-methyltransferase RlmC (389 aa).

[4Fe-4S] cluster-binding residues include C6, C14, C17, and C92. Residues Q217, F246, E273, and N319 each contribute to the S-adenosyl-L-methionine site. C346 serves as the catalytic Nucleophile.

The protein belongs to the class I-like SAM-binding methyltransferase superfamily. RNA M5U methyltransferase family. RlmC subfamily.

The enzyme catalyses uridine(747) in 23S rRNA + S-adenosyl-L-methionine = 5-methyluridine(747) in 23S rRNA + S-adenosyl-L-homocysteine + H(+). Its function is as follows. Catalyzes the formation of 5-methyl-uridine at position 747 (m5U747) in 23S rRNA. The polypeptide is 23S rRNA (uracil(747)-C(5))-methyltransferase RlmC (Glaesserella parasuis serovar 5 (strain SH0165) (Haemophilus parasuis)).